The primary structure comprises 73 residues: Putative defensin-like protein 57 (73 aa).

A signal peptide spans 1 to 25 (MRFTSMIFVLVVILINSLFNFNVLA). Cystine bridges form between C37-C71, C41-C64, C50-C69, and C54-C70.

It belongs to the DEFL family.

The protein resides in the secreted. The sequence is that of Putative defensin-like protein 57 from Arabidopsis thaliana (Mouse-ear cress).